Here is a 318-residue protein sequence, read N- to C-terminus: Olfactory receptor 5M5 (318 aa).

Residues 1–31 lie on the Extracellular side of the membrane; the sequence is MLAPKKMVRGNYSMVTEFILLGLTDRPELQP. N-linked (GlcNAc...) asparagine glycosylation is present at Asn-11. Residues 32–52 traverse the membrane as a helical segment; sequence LLFVLFLVIYLITVGGNLGMM. Residues 53 to 60 are Cytoplasmic-facing; that stretch reads VLIRIDSR. A helical membrane pass occupies residues 61–81; that stretch reads LHTPMYYFLASLSCLDLCYST. The Extracellular portion of the chain corresponds to 82 to 105; the sequence is NVTPKMLVNFLSEKKTISYAACLV. A disulfide bridge links Cys-103 with Cys-195. A helical transmembrane segment spans residues 106–126; it reads QCYFFIAMVITEYYMLAVMAY. Topologically, residues 127–139 are cytoplasmic; sequence DRYMAICNPLLYS. The helical transmembrane segment at 140-160 threads the bilayer; that stretch reads SKMSKGVCVRLIAGPYIYGFL. Residues 161 to 202 are Extracellular-facing; it reads SGLMETMWTYRLTFCGSNIINHFYCADPPLIRLSCSDTFIKE. A helical membrane pass occupies residues 203–223; that stretch reads TSMFVVAGFNLSNSLFIILIS. At 224–243 the chain is on the cytoplasmic side; the sequence is YLFILIAILRMRSAEGRRKA. The chain crosses the membrane as a helical span at residues 244–264; the sequence is FSTCGSHLVAVTVFYGTLFCM. Residues 265–277 lie on the Extracellular side of the membrane; the sequence is YVRPPTDKSVEQS. Residues 278–298 form a helical membrane-spanning segment; sequence KIIAVFYTFVSPMLNPIIYSL. Residues 299 to 318 lie on the Cytoplasmic side of the membrane; sequence RNKDVKHAFWKLVRRNVLSK.

Belongs to the G-protein coupled receptor 1 family.

It is found in the cell membrane. In terms of biological role, potential odorant receptor. The sequence is that of Olfactory receptor 5M5 from Mus musculus (Mouse).